Reading from the N-terminus, the 380-residue chain is uncharacterized protein (380 aa).

The N-terminal stretch at 1-28 (MQFLSDTQRMVLSRAVCASFFFFHVAVA) is a signal peptide. The SPOR domain maps to 307–380 (AGDEKPRGYQ…DAGYETFPLF (74 aa)).

This is an uncharacterized protein from Treponema pallidum (strain Nichols).